We begin with the raw amino-acid sequence, 25 residues long: CKGKGASCHRTSYDCCTGSCNRGKC.

Cystine bridges form between Cys1–Cys16, Cys8–Cys20, and Cys15–Cys25. Cys25 carries the cysteine amide modification.

The protein belongs to the conotoxin O1 superfamily. As to expression, expressed by the venom duct.

The protein resides in the secreted. Functionally, omega-conotoxins act at presynaptic membranes, they bind and block voltage-gated calcium channels (Cav). This is Omega-conotoxin MVIIB from Conus magus (Magical cone).